A 132-amino-acid chain; its full sequence is Small ribosomal subunit protein eS6 (132 aa).

It belongs to the eukaryotic ribosomal protein eS6 family.

The sequence is that of Small ribosomal subunit protein eS6 from Methanosphaerula palustris (strain ATCC BAA-1556 / DSM 19958 / E1-9c).